The primary structure comprises 595 residues: Fructan 1-exohydrolase (595 aa).

Residues 1-20 (MAQAWAFLLPLLVLGSYVTS) form the signal peptide. Asp74 is an active-site residue. N-linked (GlcNAc...) asparagine glycans are attached at residues Asn167, Asn235, and Asn247. A disulfide bridge connects residues Cys445 and Cys491. N-linked (GlcNAc...) asparagine glycosylation is present at Asn566.

The protein belongs to the glycosyl hydrolase 32 family.

The enzyme catalyses Hydrolysis of terminal, non-reducing (2-&gt;1)-linked beta-D-fructofuranose residues in fructans.. Its activity is regulated as follows. Inhibited by sucrose. Its function is as follows. Hydrolyzes inulin-type beta-(2,1)-fructans. May play a role as a beta-(2,1)-trimmer during graminan biosynthesis. The protein is Fructan 1-exohydrolase of Aegilops speltoides (Goatgrass).